An 87-amino-acid chain; its full sequence is MSFLDTLFGKRERSSDIARDRLLTVLVHDRVKLTPDMMEQLKADLSAVIARYVPSVDAGAIEVTLLRGESVDHLKADIPLRRTTQKY.

This sequence belongs to the MinE family.

Functionally, prevents the cell division inhibition by proteins MinC and MinD at internal division sites while permitting inhibition at polar sites. This ensures cell division at the proper site by restricting the formation of a division septum at the midpoint of the long axis of the cell. The protein is Cell division topological specificity factor of Roseiflexus sp. (strain RS-1).